Reading from the N-terminus, the 123-residue chain is uncharacterized protein (123 aa).

2 consecutive transmembrane segments (helical) span residues Val-53–Leu-73 and Val-75–His-95.

It localises to the membrane. This is an uncharacterized protein from Saccharomyces cerevisiae (strain ATCC 204508 / S288c) (Baker's yeast).